Consider the following 133-residue polypeptide: Glutaredoxin-C4, chloroplastic (133 aa).

The segment covering Met-1 to Pro-13 has biased composition (low complexity). Positions Met-1 to Pro-25 are disordered. Residues Met-1 to Met-27 constitute a chloroplast transit peptide. Positions Leu-29–Ala-129 constitute a Glutaredoxin domain. Cys-49 and Cys-52 are oxidised to a cystine.

It belongs to the glutaredoxin family. CPYC subfamily.

The protein localises to the plastid. The protein resides in the chloroplast. Has a glutathione-disulfide oxidoreductase activity in the presence of NADPH and glutathione reductase. Reduces low molecular weight disulfides and proteins. The polypeptide is Glutaredoxin-C4, chloroplastic (GRXC4) (Oryza sativa subsp. japonica (Rice)).